Consider the following 92-residue polypeptide: Protein RESPONSE TO LOW SULFUR 4 (92 aa).

A coiled-coil region spans residues 8-63 (VMVAASEVEELRQKNGEMEKAVEEMRKEMLQLWRRTQVAEEAEEHLCSQLAELEAE).

Functionally, required for flower development in short-day conditions. The chain is Protein RESPONSE TO LOW SULFUR 4 from Arabidopsis thaliana (Mouse-ear cress).